A 619-amino-acid polypeptide reads, in one-letter code: Dihydroxy-acid dehydratase (619 aa).

Asp-81 is a binding site for Mg(2+). Position 122 (Cys-122) interacts with [2Fe-2S] cluster. Residues Asp-123 and Lys-124 each coordinate Mg(2+). At Lys-124 the chain carries N6-carboxylysine. Cys-195 is a binding site for [2Fe-2S] cluster. Glu-492 is a binding site for Mg(2+). The active-site Proton acceptor is Ser-518.

It belongs to the IlvD/Edd family. In terms of assembly, homodimer. [2Fe-2S] cluster serves as cofactor. The cofactor is Mg(2+).

The catalysed reaction is (2R)-2,3-dihydroxy-3-methylbutanoate = 3-methyl-2-oxobutanoate + H2O. It carries out the reaction (2R,3R)-2,3-dihydroxy-3-methylpentanoate = (S)-3-methyl-2-oxopentanoate + H2O. It functions in the pathway amino-acid biosynthesis; L-isoleucine biosynthesis; L-isoleucine from 2-oxobutanoate: step 3/4. Its pathway is amino-acid biosynthesis; L-valine biosynthesis; L-valine from pyruvate: step 3/4. Functions in the biosynthesis of branched-chain amino acids. Catalyzes the dehydration of (2R,3R)-2,3-dihydroxy-3-methylpentanoate (2,3-dihydroxy-3-methylvalerate) into 2-oxo-3-methylpentanoate (2-oxo-3-methylvalerate) and of (2R)-2,3-dihydroxy-3-methylbutanoate (2,3-dihydroxyisovalerate) into 2-oxo-3-methylbutanoate (2-oxoisovalerate), the penultimate precursor to L-isoleucine and L-valine, respectively. The chain is Dihydroxy-acid dehydratase from Synechococcus elongatus (strain ATCC 33912 / PCC 7942 / FACHB-805) (Anacystis nidulans R2).